Consider the following 257-residue polypeptide: Glutamate racemase (257 aa).

Substrate contacts are provided by residues 12–13 (DS) and 44–45 (YG). The active-site Proton donor/acceptor is the C75. 76 to 77 (NT) is a substrate binding site. C176 (proton donor/acceptor) is an active-site residue. Residue 177–178 (TH) participates in substrate binding.

This sequence belongs to the aspartate/glutamate racemases family.

The catalysed reaction is L-glutamate = D-glutamate. The protein operates within cell wall biogenesis; peptidoglycan biosynthesis. In terms of biological role, provides the (R)-glutamate required for cell wall biosynthesis. This is Glutamate racemase from Thermus thermophilus (strain ATCC 27634 / DSM 579 / HB8).